The sequence spans 185 residues: Peptidyl-tRNA hydrolase (185 aa).

Tyrosine 14 provides a ligand contact to tRNA. Histidine 19 serves as the catalytic Proton acceptor. TRNA-binding residues include tyrosine 64, asparagine 66, and asparagine 112.

This sequence belongs to the PTH family. In terms of assembly, monomer.

It localises to the cytoplasm. It carries out the reaction an N-acyl-L-alpha-aminoacyl-tRNA + H2O = an N-acyl-L-amino acid + a tRNA + H(+). Its function is as follows. Hydrolyzes ribosome-free peptidyl-tRNAs (with 1 or more amino acids incorporated), which drop off the ribosome during protein synthesis, or as a result of ribosome stalling. In terms of biological role, catalyzes the release of premature peptidyl moieties from peptidyl-tRNA molecules trapped in stalled 50S ribosomal subunits, and thus maintains levels of free tRNAs and 50S ribosomes. The protein is Peptidyl-tRNA hydrolase of Lactobacillus helveticus (strain DPC 4571).